We begin with the raw amino-acid sequence, 196 residues long: Nucleoid occlusion factor SlmA (196 aa).

In terms of domain architecture, HTH tetR-type spans 6–66 (RNRREEILQA…GLIEFVEDTL (61 aa)). A DNA-binding region (H-T-H motif) is located at residues 29–48 (TTAKLAANLGVSEAALYRHF). Positions 108–135 (DALMGEHDRLRGRMEDLFNRIESSIKQI) form a coiled coil.

The protein belongs to the nucleoid occlusion factor SlmA family. Homodimer. Interacts with FtsZ.

It is found in the cytoplasm. Its subcellular location is the nucleoid. Required for nucleoid occlusion (NO) phenomenon, which prevents Z-ring formation and cell division over the nucleoid. Acts as a DNA-associated cell division inhibitor that binds simultaneously chromosomal DNA and FtsZ, and disrupts the assembly of FtsZ polymers. SlmA-DNA-binding sequences (SBS) are dispersed on non-Ter regions of the chromosome, preventing FtsZ polymerization at these regions. The polypeptide is Nucleoid occlusion factor SlmA (Idiomarina loihiensis (strain ATCC BAA-735 / DSM 15497 / L2-TR)).